The chain runs to 570 residues: Peptidyl-prolyl cis-trans isomerase FKBP9 (570 aa).

An N-terminal signal peptide occupies residues 1-24 (MAFGARGWRRWSLLLLLLWVTGQA). PPIase FKBP-type domains lie at 54-142 (GDFV…VDIW), 166-254 (SDFV…LDLH), 278-365 (GDFL…IDFH), and 389-477 (GDYL…LELV). N-linked (GlcNAc...) asparagine glycans are attached at residues Asn174, Asn286, Asn302, and Asn397. EF-hand domains lie at 488–523 (WNGE…QVAS) and 533–568 (NAEM…TKHD). Asp501, Asp503, Asn505, Glu507, Glu512, Asp546, Asn548, Asp550, Lys552, and Glu557 together coordinate Ca(2+). Residues 567 to 570 (HDEL) carry the Prevents secretion from ER motif.

Phosphorylated.

It localises to the endoplasmic reticulum lumen. It catalyses the reaction [protein]-peptidylproline (omega=180) = [protein]-peptidylproline (omega=0). Its activity is regulated as follows. Inhibited by FK506. PPIases accelerate the folding of proteins during protein synthesis. The protein is Peptidyl-prolyl cis-trans isomerase FKBP9 (Fkbp9) of Rattus norvegicus (Rat).